A 534-amino-acid polypeptide reads, in one-letter code: Protein BFR2 (534 aa).

The tract at residues 27–148 is disordered; that stretch reads ENASLFQHNE…ETEEAQQKRH (122 aa). Phosphoserine occurs at positions 41 and 44. Residues 52-77 are compositionally biased toward basic and acidic residues; that stretch reads EETKKAHYLEVEKSKLRAEKGLELND. Residues 86–161 are a coiled coil; sequence SRQALYEEVS…KLIQQETKQA (76 aa). Acidic residues-rich tracts occupy residues 93 to 114 and 121 to 142; these read EVSENEDEEEEEEEEEEKEEDA and SEDEEVEIDEEESDADGGETEE. 3 positions are modified to phosphoserine: Ser366, Ser372, and Ser379.

This sequence belongs to the AATF family.

The protein localises to the nucleus. It localises to the nucleolus. Its function is as follows. Involved in endoplasmic reticulum to Golgi transport. Involved in a protein-transport step blocked by brefeldin A, which disrupts the Golgi apparatus and its incoming protein flux. May also be involved for mass growth or cell proliferation. The polypeptide is Protein BFR2 (BFR2) (Saccharomyces cerevisiae (strain ATCC 204508 / S288c) (Baker's yeast)).